The sequence spans 997 residues: Translation initiation factor IF-2 (997 aa).

Positions 36–415 (SMAGSLTTEE…ATQPLKAAKR (380 aa)) are disordered. Basic and acidic residues-rich tracts occupy residues 45–65 (EAARVREHFAEQKQADAERSG) and 94–107 (AREEVAPPAEEKPA). A compositionally biased stretch (low complexity) spans 108 to 126 (AVEAPAQAEPVAEAPAASP). The segment covering 127 to 147 (HKVEEKAAPEAAKAEPAEKAK) has biased composition (basic and acidic residues). Residues 151–162 (ARVVSAARVISR) are compositionally biased toward low complexity. Over residues 163–181 (PGEEEEKKPEPVVESKPEP) the composition is skewed to basic and acidic residues. Low complexity predominate over residues 182-196 (VAEISPVAAALAARE). 2 stretches are compositionally biased toward basic and acidic residues: residues 197–214 (AAARAEEKSSEKGEEKGA) and 241–252 (PEARTEAWKDAD). A compositionally biased stretch (gly residues) spans 300-309 (GRPGAPGGPR). Residues 316–335 (PPRPGGPRPSGPGGPRPAGG) are compositionally biased toward pro residues. The span at 378–388 (GGRRDDDDSQR) shows a compositional bias: basic and acidic residues. Residues 390 to 399 (NRGKGRRKGG) are compositionally biased toward basic residues. Positions 496–665 (PRPPVVTIMG…ALQSEIMELK (170 aa)) constitute a tr-type G domain. The tract at residues 505–512 (GHVDHGKT) is G1. Residue 505–512 (GHVDHGKT) coordinates GTP. The tract at residues 530–534 (GITQH) is G2. The interval 551–554 (DTPG) is G3. GTP-binding positions include 551–555 (DTPGH) and 605–608 (NKMD). Residues 605–608 (NKMD) form a G4 region. The tract at residues 641–643 (AAK) is G5.

Belongs to the TRAFAC class translation factor GTPase superfamily. Classic translation factor GTPase family. IF-2 subfamily.

It is found in the cytoplasm. Its function is as follows. One of the essential components for the initiation of protein synthesis. Protects formylmethionyl-tRNA from spontaneous hydrolysis and promotes its binding to the 30S ribosomal subunits. Also involved in the hydrolysis of GTP during the formation of the 70S ribosomal complex. In Desulfovibrio desulfuricans (strain ATCC 27774 / DSM 6949 / MB), this protein is Translation initiation factor IF-2.